We begin with the raw amino-acid sequence, 134 residues long: Syncollin (134 aa).

A signal peptide spans 1-21 (MSPLRPLLLALALASVPCAQG).

As to quaternary structure, monomer and homooligomer; most probably hexameric. Interacts with GP2. In terms of processing, contains intrachain disulfide bonds.

The protein localises to the zymogen granule membrane. The protein resides in the zymogen granule lumen. Functionally, functions in exocytosis in pancreatic acinar cells regulating the fusion of zymogen granules with each other. May have a pore-forming activity on membranes and regulate exocytosis in other exocrine tissues. The chain is Syncollin (SYCN) from Homo sapiens (Human).